We begin with the raw amino-acid sequence, 92 residues long: Small ribosomal subunit protein uS19 (92 aa).

Belongs to the universal ribosomal protein uS19 family.

In terms of biological role, protein S19 forms a complex with S13 that binds strongly to the 16S ribosomal RNA. This is Small ribosomal subunit protein uS19 from Geobacillus kaustophilus (strain HTA426).